The chain runs to 329 residues: Beta-ketoacyl-[acyl-carrier-protein] synthase III (329 aa).

Active-site residues include cysteine 114 and histidine 255. Residues 256-260 (QANQR) form an ACP-binding region. The active site involves asparagine 285.

It belongs to the thiolase-like superfamily. FabH family. In terms of assembly, homodimer.

The protein resides in the cytoplasm. It carries out the reaction malonyl-[ACP] + acetyl-CoA + H(+) = 3-oxobutanoyl-[ACP] + CO2 + CoA. The protein operates within lipid metabolism; fatty acid biosynthesis. Functionally, catalyzes the condensation reaction of fatty acid synthesis by the addition to an acyl acceptor of two carbons from malonyl-ACP. Catalyzes the first condensation reaction which initiates fatty acid synthesis and may therefore play a role in governing the total rate of fatty acid production. Possesses both acetoacetyl-ACP synthase and acetyl transacylase activities. Its substrate specificity determines the biosynthesis of branched-chain and/or straight-chain of fatty acids. This Trichodesmium erythraeum (strain IMS101) protein is Beta-ketoacyl-[acyl-carrier-protein] synthase III.